Here is a 110-residue protein sequence, read N- to C-terminus: Large ribosomal subunit protein uL22 (110 aa).

It belongs to the universal ribosomal protein uL22 family. As to quaternary structure, part of the 50S ribosomal subunit.

Functionally, this protein binds specifically to 23S rRNA; its binding is stimulated by other ribosomal proteins, e.g. L4, L17, and L20. It is important during the early stages of 50S assembly. It makes multiple contacts with different domains of the 23S rRNA in the assembled 50S subunit and ribosome. In terms of biological role, the globular domain of the protein is located near the polypeptide exit tunnel on the outside of the subunit, while an extended beta-hairpin is found that lines the wall of the exit tunnel in the center of the 70S ribosome. The protein is Large ribosomal subunit protein uL22 of Paracidovorax citrulli (strain AAC00-1) (Acidovorax citrulli).